The primary structure comprises 603 residues: Replication protein A 70 kDa DNA-binding subunit (603 aa).

Residues 131-152 (PKPAVTSNSKPIAKKEPSHNNN) are disordered. Phosphoserine is present on S160. The OB DNA-binding region spans 179-252 (WVIKARVTSK…QLKPANKQYS (74 aa)). S420 carries the phosphoserine modification. The segment at 464–486 (CPQSDCNKKVVDEGNDQFRCEKC) adopts a C4-type zinc-finger fold.

It belongs to the replication factor A protein 1 family. Component of the heterotrimeric canonical replication protein A complex (RPA).

The protein resides in the nucleus. Its function is as follows. As part of the heterotrimeric replication protein A complex (RPA/RP-A), binds and stabilizes single-stranded DNA intermediates, that form during DNA replication or upon DNA stress. It prevents their reannealing and in parallel, recruits and activates different proteins and complexes involved in DNA metabolism. Thereby, it plays an essential role both in DNA replication and the cellular response to DNA damage. This is Replication protein A 70 kDa DNA-binding subunit from Drosophila melanogaster (Fruit fly).